The sequence spans 299 residues: Protein NSG2 (299 aa).

The Cytoplasmic portion of the chain corresponds to Met-1–Asn-108. The residue at position 90 (Ser-90) is a Phosphoserine. Residues Ile-109–Leu-129 traverse the membrane as a helical segment. At Ser-130 to Gly-161 the chain is on the lumenal side. A helical transmembrane segment spans residues Val-162 to Ile-182. Topologically, residues Leu-183–Asn-237 are cytoplasmic. The chain crosses the membrane as a helical span at residues Ile-238–Gly-258. Over Val-259–Asp-268 the chain is Lumenal. A helical membrane pass occupies residues Ile-269 to Phe-289. Topologically, residues Gly-290–His-299 are cytoplasmic.

The protein belongs to the INSIG family.

The protein resides in the endoplasmic reticulum membrane. Functionally, stabilizes the HMG-CoA reductase HMG2 by preventing its HRD1-dependent degradation. Binds directly to the sterol-sensing domain (SSD)-containing transmembrane region of HMG2, promoting its folding to protect it from degradation. In Saccharomyces cerevisiae (strain ATCC 204508 / S288c) (Baker's yeast), this protein is Protein NSG2 (NSG2).